The following is a 438-amino-acid chain: Probable tRNA pseudouridine synthase D (438 aa).

D86 functions as the Nucleophile in the catalytic mechanism. Residues 165–390 (GVPNFFGIQR…SKGTRREVLL (226 aa)) enclose the TRUD domain.

The protein belongs to the pseudouridine synthase TruD family.

The enzyme catalyses uridine(13) in tRNA = pseudouridine(13) in tRNA. Could be responsible for synthesis of pseudouridine from uracil-13 in transfer RNAs. This is Probable tRNA pseudouridine synthase D from Methanosarcina mazei (strain ATCC BAA-159 / DSM 3647 / Goe1 / Go1 / JCM 11833 / OCM 88) (Methanosarcina frisia).